The following is a 1045-amino-acid chain: B3 domain-containing protein REM13 (1045 aa).

The segment at residues 7-96 (YPQFFHTLVP…VFHVSNLGPN (90 aa)) is a DNA-binding region (TF-B3 1). Residues 121-147 (NNGDVCDSEELPKEKKAKTNSEEADAV) form a disordered region. Positions 130 to 141 (ELPKEKKAKTNS) are enriched in basic and acidic residues. 2 DNA-binding regions (TF-B3) span residues 157-253 (CFMA…FCPT) and 305-398 (FVTF…CSPE). A disordered region spans residues 423 to 449 (NRDKISNNDKEENMSWERKKDHLKSRD). The segment at residues 474–570 (SNDSCLVVVS…TPVLSLCPAD (97 aa)) is a DNA-binding region (TF-B3 4). Residues 606–625 (IKDDNSKEKNDKEESKSVDG) form a disordered region. 3 consecutive DNA-binding regions (TF-B3) follow at residues 643-738 (FVTL…LRTE), 815-910 (FVTF…LRTK), and 940-1035 (FVTL…LKFS).

The protein localises to the nucleus. The protein is B3 domain-containing protein REM13 (REM13) of Arabidopsis thaliana (Mouse-ear cress).